We begin with the raw amino-acid sequence, 118 residues long: Basic phospholipase A2 acanthin-2 (118 aa).

Cystine bridges form between C11–C71, C27–C117, C29–C45, C44–C98, C51–C91, C60–C84, and C78–C89. Residues Y28, G30, and G32 each contribute to the Ca(2+) site. Residue H48 is part of the active site. D49 is a binding site for Ca(2+). Residue D92 is part of the active site.

The cofactor is Ca(2+). Expressed by the venom gland.

The protein localises to the secreted. The catalysed reaction is a 1,2-diacyl-sn-glycero-3-phosphocholine + H2O = a 1-acyl-sn-glycero-3-phosphocholine + a fatty acid + H(+). Its function is as follows. Snake venom phospholipase A2 (PLA2) that potently inhibits ADP-(IC(50)=12 nM) and collagen-induced (IC(50)=4 nM) platelet aggregation when tested on human whole blood. PLA2 catalyzes the calcium-dependent hydrolysis of the 2-acyl groups in 3-sn-phosphoglycerides. In Acanthophis antarcticus (Common death adder), this protein is Basic phospholipase A2 acanthin-2.